We begin with the raw amino-acid sequence, 136 residues long: Globin-2 (136 aa).

Residues 1 to 134 enclose the Globin domain; the sequence is VSQADIAAVQ…ILSQMKIALS (134 aa). His89 contributes to the heme b binding site.

Belongs to the globin family. Homodimer.

This is Globin-2 from Phreagena soyoae (Deep-sea cold-seep clam).